Here is a 20-residue protein sequence, read N- to C-terminus: Small ribosomal subunit protein bS20 (20 aa).

It belongs to the bacterial ribosomal protein bS20 family.

Functionally, binds directly to 16S ribosomal RNA. This chain is Small ribosomal subunit protein bS20 (rpsT), found in Brevundimonas diminuta (Pseudomonas diminuta).